A 153-amino-acid chain; its full sequence is Histone H2B type W-T (153 aa).

A disordered region spans residues 1–54; that stretch reads MATASAMAGPSSETTSEEQLITQEPKEANSTTSQKQSKQRKRGRHGPRRCHSNC. Polar residues predominate over residues 11-36; the sequence is SSETTSEEQLITQEPKEANSTTSQKQ. The span at 37–52 shows a compositional bias: basic residues; it reads SKQRKRGRHGPRRCHS.

This sequence belongs to the histone H2B family. Can replace the conventional histone H2B in the nucleosome. The nucleosome is a histone octamer containing two molecules each of H2A, H2B, H3 and H4 assembled in one H3-H4 heterotetramer and two H2A-H2B heterodimers. The octamer wraps approximately 147 bp of DNA. Testis-specific (at protein level).

The protein localises to the nucleus membrane. Its subcellular location is the chromosome. It is found in the telomere. Functionally, atypical histone H2B that can form nucleosomes structurally and dynamically indistinguishable from those containing conventional H2B. Nucleosomes wrap and compact DNA into chromatin, limiting DNA accessibility to the cellular machineries which require DNA as a template. Histones thereby play a central role in transcription regulation, DNA repair, DNA replication and chromosomal stability. DNA accessibility is regulated via a complex set of post-translational modifications of histones, also called histone code, and nucleosome remodeling. However, unlike conventional H2B, does not recruit chromosome condensation factors and does not participate in the assembly of mitotic chromosomes. May be important for telomere function and play a role in spermatogenesis. The polypeptide is Histone H2B type W-T (Homo sapiens (Human)).